Here is a 707-residue protein sequence, read N- to C-terminus: Anti-sigma-I factor RsgI9 (707 aa).

The Cytoplasmic segment spans residues 1-149; the sequence is MKITGVIVRI…NFSRISNIKN (149 aa). The region spanning 3–50 is the RsgI N-terminal anti-sigma domain; sequence ITGVIVRIHKDRAIIRTDDNRLLAVKRHNDMMVGQIVSFDANEVHKVE. The helical transmembrane segment at 150–172 threads the bilayer; sequence FSRIASIAAAFVLIFLFGRNVML. The Extracellular portion of the chain corresponds to 173–707; the sequence is NNSSDSEYAY…DSEEKKEYIQ (535 aa). Residues 256-283 adopt a coiled-coil conformation; that stretch reads NDKNKKTRDKREEKIDELKETIEQGIEA. Positions 345 to 392 are disordered; sequence EDNTELAPTPTPVPPETPEPTPTPTASEATPSNSPVESKSPEAVPELG. Residues 353–367 show a composition bias toward pro residues; the sequence is TPTPVPPETPEPTPT. Positions 368-379 are enriched in low complexity; sequence PTASEATPSNSP.

It is found in the cell membrane. This chain is Anti-sigma-I factor RsgI9, found in Acetivibrio thermocellus (strain ATCC 27405 / DSM 1237 / JCM 9322 / NBRC 103400 / NCIMB 10682 / NRRL B-4536 / VPI 7372) (Clostridium thermocellum).